Reading from the N-terminus, the 407-residue chain is Cysteine desulfurase (407 aa).

The residue at position 226 (Lys226) is an N6-(pyridoxal phosphate)lysine. Cys364 functions as the Cysteine persulfide intermediate in the catalytic mechanism.

It belongs to the class-V pyridoxal-phosphate-dependent aminotransferase family. Csd subfamily. In terms of assembly, homodimer. Interacts with SufE and the SufBCD complex composed of SufB, SufC and SufD. The interaction with SufE is required to mediate the direct transfer of the sulfur atom from the S-sulfanylcysteine. The cofactor is pyridoxal 5'-phosphate.

It localises to the cytoplasm. It catalyses the reaction (sulfur carrier)-H + L-cysteine = (sulfur carrier)-SH + L-alanine. The catalysed reaction is L-selenocysteine + AH2 = hydrogenselenide + L-alanine + A + H(+). It functions in the pathway cofactor biosynthesis; iron-sulfur cluster biosynthesis. Functionally, cysteine desulfurases mobilize the sulfur from L-cysteine to yield L-alanine, an essential step in sulfur metabolism for biosynthesis of a variety of sulfur-containing biomolecules. Component of the suf operon, which is activated and required under specific conditions such as oxidative stress and iron limitation. Acts as a potent selenocysteine lyase in vitro, that mobilizes selenium from L-selenocysteine. Selenocysteine lyase activity is however unsure in vivo. This Pectobacterium atrosepticum (strain SCRI 1043 / ATCC BAA-672) (Erwinia carotovora subsp. atroseptica) protein is Cysteine desulfurase.